The chain runs to 125 residues: Large ribosomal subunit protein bL17 (125 aa).

The protein belongs to the bacterial ribosomal protein bL17 family. As to quaternary structure, part of the 50S ribosomal subunit. Contacts protein L32.

The sequence is that of Large ribosomal subunit protein bL17 from Syntrophus aciditrophicus (strain SB).